The following is a 278-amino-acid chain: Hydroxyethylthiazole kinase (278 aa).

Met-46 contributes to the substrate binding site. ATP is bound by residues Arg-122 and Thr-168. Gly-195 provides a ligand contact to substrate.

The protein belongs to the Thz kinase family. Requires Mg(2+) as cofactor.

The enzyme catalyses 5-(2-hydroxyethyl)-4-methylthiazole + ATP = 4-methyl-5-(2-phosphooxyethyl)-thiazole + ADP + H(+). It participates in cofactor biosynthesis; thiamine diphosphate biosynthesis; 4-methyl-5-(2-phosphoethyl)-thiazole from 5-(2-hydroxyethyl)-4-methylthiazole: step 1/1. Its function is as follows. Catalyzes the phosphorylation of the hydroxyl group of 4-methyl-5-beta-hydroxyethylthiazole (THZ). This chain is Hydroxyethylthiazole kinase, found in Chloroflexus aggregans (strain MD-66 / DSM 9485).